We begin with the raw amino-acid sequence, 34 residues long: Leader peptide SpeFL (34 aa).

The short motif at 10 to 16 is the Ornithine recognition loop element; the sequence is HIRRTTH. Arginine 13 is an L-ornithine binding site.

It belongs to the speF operon leader peptide family. In terms of assembly, binds ornithine in stalled 70S ribosomes, blocking the upper two-thirds of the exit tunnel. Contacts 23S rRNA and ribosomal proteins L4 and L22.

Its function is as follows. A small protein (arrest peptide) encoded upstream of inducible ornithine carboxylase gene (speF) that controls expression of downstream genes (speF and potE) by transcriptional and translational attenuation. Its expression controls transcription and translation of downstream SpeF; translation pausing at low Arg levels on this mRNA prevents premature Rho-dependent transcription termination of speF and also enhances SprF translation by preventing sequestration of its ribosome-binding site. In the presence of high Arg levels translation of this protein allows the formation of an speF mRNA structure that is degraded by RNase G. This Salmonella typhimurium (strain SL1344) protein is Leader peptide SpeFL.